We begin with the raw amino-acid sequence, 248 residues long: Small ribosomal subunit protein uS3 (248 aa).

The region spanning 39–107 is the KH type-2 domain; that stretch reads IRQMLLKQLK…EVFINIVEIR (69 aa). Residues 214-248 form a disordered region; the sequence is AVDKRMTAESEGPSSGRPPRRDRDRDRDRDRDSAA. Positions 232 to 248 are enriched in basic and acidic residues; that stretch reads PRRDRDRDRDRDRDSAA.

This sequence belongs to the universal ribosomal protein uS3 family. Part of the 30S ribosomal subunit. Forms a tight complex with proteins S10 and S14.

Functionally, binds the lower part of the 30S subunit head. Binds mRNA in the 70S ribosome, positioning it for translation. This is Small ribosomal subunit protein uS3 from Azorhizobium caulinodans (strain ATCC 43989 / DSM 5975 / JCM 20966 / LMG 6465 / NBRC 14845 / NCIMB 13405 / ORS 571).